A 529-amino-acid chain; its full sequence is Autoinducer-2 kinase (529 aa).

The protein belongs to the FGGY kinase family.

It is found in the cytoplasm. It carries out the reaction (S)-4,5-dihydroxypentane-2,3-dione + ATP = (2S)-2-hydroxy-3,4-dioxopentyl phosphate + ADP + H(+). Its function is as follows. Catalyzes the phosphorylation of autoinducer-2 (AI-2) to phospho-AI-2, which subsequently inactivates the transcriptional regulator LsrR and leads to the transcription of the lsr operon. Phosphorylates the ring-open form of (S)-4,5-dihydroxypentane-2,3-dione (DPD), which is the precursor to all AI-2 signaling molecules, at the C5 position. The chain is Autoinducer-2 kinase from Yersinia enterocolitica serotype O:8 / biotype 1B (strain NCTC 13174 / 8081).